Consider the following 327-residue polypeptide: Methionyl-tRNA formyltransferase (327 aa).

121–124 is a binding site for (6S)-5,6,7,8-tetrahydrofolate; sequence SLLP.

This sequence belongs to the Fmt family.

The catalysed reaction is L-methionyl-tRNA(fMet) + (6R)-10-formyltetrahydrofolate = N-formyl-L-methionyl-tRNA(fMet) + (6S)-5,6,7,8-tetrahydrofolate + H(+). Functionally, attaches a formyl group to the free amino group of methionyl-tRNA(fMet). The formyl group appears to play a dual role in the initiator identity of N-formylmethionyl-tRNA by promoting its recognition by IF2 and preventing the misappropriation of this tRNA by the elongation apparatus. This is Methionyl-tRNA formyltransferase from Burkholderia pseudomallei (strain 668).